A 97-amino-acid polypeptide reads, in one-letter code: Large ribosomal subunit protein eL21 (97 aa).

It belongs to the eukaryotic ribosomal protein eL21 family.

This is Large ribosomal subunit protein eL21 from Methanosarcina mazei (strain ATCC BAA-159 / DSM 3647 / Goe1 / Go1 / JCM 11833 / OCM 88) (Methanosarcina frisia).